The sequence spans 60 residues: Large ribosomal subunit protein bL33 (60 aa).

The protein belongs to the bacterial ribosomal protein bL33 family.

The protein is Large ribosomal subunit protein bL33 of Chlorobium phaeobacteroides (strain DSM 266 / SMG 266 / 2430).